Reading from the N-terminus, the 95-residue chain is Small ribosomal subunit protein bS18 (95 aa).

The protein belongs to the bacterial ribosomal protein bS18 family. As to quaternary structure, part of the 30S ribosomal subunit. Forms a tight heterodimer with protein bS6.

Binds as a heterodimer with protein bS6 to the central domain of the 16S rRNA, where it helps stabilize the platform of the 30S subunit. The sequence is that of Small ribosomal subunit protein bS18 from Rickettsia canadensis (strain McKiel).